The primary structure comprises 485 residues: Dynein axonemal assembly factor 3 (485 aa).

This sequence belongs to the DNAAF3 family.

Its subcellular location is the cytoplasm. The protein resides in the dynein axonemal particle. Functionally, required for the assembly of axonemal inner and outer dynein arms. Involved in preassembly of dyneins into complexes before their transport into cilia. This Xenopus laevis (African clawed frog) protein is Dynein axonemal assembly factor 3 (dnaaf3).